We begin with the raw amino-acid sequence, 558 residues long: uncharacterized protein (558 aa).

Residues 338 to 354 (STSTSTSTSTSSSNDLN) show a composition bias toward low complexity. The disordered stretch occupies residues 338-380 (STSTSTSTSTSSSNDLNLDSDSDDSDSDDSDSDSDSDSDSEID). The segment covering 355–380 (LDSDSDDSDSDDSDSDSDSDSDSEID) has biased composition (acidic residues).

The protein resides in the plastid. This is an uncharacterized protein from Euglena longa (Euglenophycean alga).